The sequence spans 96 residues: Small ribosomal subunit protein bS6 (96 aa).

Belongs to the bacterial ribosomal protein bS6 family.

Functionally, binds together with bS18 to 16S ribosomal RNA. The sequence is that of Small ribosomal subunit protein bS6 from Streptococcus pyogenes serotype M1.